Consider the following 107-residue polypeptide: Alpha-elapitoxin-Al2a (107 aa).

An N-terminal signal peptide occupies residues 1 to 21 (MKTLLLTLVVVTIVCLDLGDS). 5 disulfide bridges follow: Cys-24–Cys-41, Cys-34–Cys-62, Cys-47–Cys-51, Cys-66–Cys-77, and Cys-78–Cys-83.

Belongs to the three-finger toxin family. Long-chain subfamily. Type II alpha-neurotoxin sub-subfamily. Expressed by the venom gland.

It is found in the secreted. Functionally, binds with high affinity to muscular (alpha-1/CHRNA1) and neuronal (alpha-7/CHRNA7) nicotinic acetylcholine receptor (nAChR) and inhibits acetylcholine from binding to the receptor, thereby impairing neuromuscular and neuronal transmission. The sequence is that of Alpha-elapitoxin-Al2a from Austrelaps labialis (Pygmy copperhead).